Here is a 134-residue protein sequence, read N- to C-terminus: Alkaline proteinase inhibitor (134 aa).

A signal peptide spans 1 to 26 (MVFAAWYLKFAGFVALIFSIIGGSMA). Cys50 and Cys73 are oxidised to a cystine.

This sequence belongs to the protease inhibitor I38 family.

The protein resides in the periplasm. Inhibitor of the alkaline protease. The protein is Alkaline proteinase inhibitor (inh) of Photorhabdus laumondii subsp. laumondii (strain DSM 15139 / CIP 105565 / TT01) (Photorhabdus luminescens subsp. laumondii).